The sequence spans 360 residues: MLVWLAEYLVQYNTAFNVVSYITFRSIMALLTALIIGLWIGSTVIRRLQILKFGQEVRHDGPESHYKKRGTPTMGGIMILFAIGVSTLLWADLRNPYVWFVLFILFGYGVVGFVDDYWKIARKNTDGLIARWKYFWLSVIALVSAFGMYAIGKDTAATQLVVPFFKDVMPQLGLFYIVLTYFVIVGTSNAVNLTDGLDGLAIVPLIMVAGAFALIAWATGNYNFAQYLHIPYIKYSGELVILCTAIVGAGLGFLWFNTYPAQVFMGDVGSLSLGGALGVIAVLVRQELLLVVMGGVFVVEALSVILQVGSYKLRQKRIFRMAPIHHHFELKGWPEPRVIVRFWIITLMLVLIGLVTLKLR.

Helical transmembrane passes span 21 to 41 (YITF…LWIG), 73 to 93 (TMGG…WADL), 98 to 118 (VWFV…DDYW), 132 to 152 (WKYF…YAIG), 168 to 188 (VMPQ…VGTS), 199 to 219 (GLAI…AWAT), 236 to 256 (SGEL…FLWF), 263 to 283 (VFMG…IAVL), 288 to 308 (LLLV…ILQV), and 338 to 358 (VIVR…VTLK).

This sequence belongs to the glycosyltransferase 4 family. MraY subfamily. The cofactor is Mg(2+).

The protein resides in the cell inner membrane. The enzyme catalyses UDP-N-acetyl-alpha-D-muramoyl-L-alanyl-gamma-D-glutamyl-meso-2,6-diaminopimeloyl-D-alanyl-D-alanine + di-trans,octa-cis-undecaprenyl phosphate = di-trans,octa-cis-undecaprenyl diphospho-N-acetyl-alpha-D-muramoyl-L-alanyl-D-glutamyl-meso-2,6-diaminopimeloyl-D-alanyl-D-alanine + UMP. It functions in the pathway cell wall biogenesis; peptidoglycan biosynthesis. In terms of biological role, catalyzes the initial step of the lipid cycle reactions in the biosynthesis of the cell wall peptidoglycan: transfers peptidoglycan precursor phospho-MurNAc-pentapeptide from UDP-MurNAc-pentapeptide onto the lipid carrier undecaprenyl phosphate, yielding undecaprenyl-pyrophosphoryl-MurNAc-pentapeptide, known as lipid I. The sequence is that of Phospho-N-acetylmuramoyl-pentapeptide-transferase from Glaesserella parasuis serovar 5 (strain SH0165) (Haemophilus parasuis).